The following is a 64-amino-acid chain: Alpha-mammal toxin Lqq5 (64 aa).

An LCN-type CS-alpha/beta domain is found at 2-64; that stretch reads KDGYIVDDKN…VSIKEKGRCN (63 aa). Cystine bridges form between C12/C63, C16/C36, C22/C46, and C26/C48. Position 64 is an asparagine amide (N64).

The protein belongs to the long (4 C-C) scorpion toxin superfamily. Sodium channel inhibitor family. Alpha subfamily. Expressed by the venom gland.

It is found in the secreted. Alpha toxins bind voltage-independently at site-3 of sodium channels (Nav) and inhibit the inactivation of the activated channels, thereby blocking neuronal transmission. Is active on mammals and bind with high affinity to rat brain synaptosome. Does not display phospholipid-binding activity. This is Alpha-mammal toxin Lqq5 from Leiurus quinquestriatus quinquestriatus (Egyptian scorpion).